The sequence spans 681 residues: DNA ligase (681 aa).

NAD(+) is bound by residues 44–48 (DYIYD), 94–95 (SL), and Glu-124. Residue Lys-126 is the N6-AMP-lysine intermediate of the active site. Residues Arg-147, Glu-181, Lys-297, and Lys-321 each coordinate NAD(+). The Zn(2+) site is built by Cys-415, Cys-418, Cys-433, and Cys-438. A BRCT domain is found at 598–681 (DETSFFYGKK…EAQAKEGTDK (84 aa)).

Belongs to the NAD-dependent DNA ligase family. LigA subfamily. Mg(2+) is required as a cofactor. The cofactor is Mn(2+).

The enzyme catalyses NAD(+) + (deoxyribonucleotide)n-3'-hydroxyl + 5'-phospho-(deoxyribonucleotide)m = (deoxyribonucleotide)n+m + AMP + beta-nicotinamide D-nucleotide.. Its function is as follows. DNA ligase that catalyzes the formation of phosphodiester linkages between 5'-phosphoryl and 3'-hydroxyl groups in double-stranded DNA using NAD as a coenzyme and as the energy source for the reaction. It is essential for DNA replication and repair of damaged DNA. The polypeptide is DNA ligase (Leuconostoc citreum (strain KM20)).